Here is a 158-residue protein sequence, read N- to C-terminus: NADH-quinone oxidoreductase subunit B 1 (158 aa).

[4Fe-4S] cluster is bound by residues Cys-37, Cys-38, Cys-102, and Cys-132.

This sequence belongs to the complex I 20 kDa subunit family. As to quaternary structure, NDH-1 is composed of 14 different subunits. Subunits NuoB, C, D, E, F, and G constitute the peripheral sector of the complex. The cofactor is [4Fe-4S] cluster.

It localises to the cell inner membrane. It carries out the reaction a quinone + NADH + 5 H(+)(in) = a quinol + NAD(+) + 4 H(+)(out). Its function is as follows. NDH-1 shuttles electrons from NADH, via FMN and iron-sulfur (Fe-S) centers, to quinones in the respiratory chain. Couples the redox reaction to proton translocation (for every two electrons transferred, four hydrogen ions are translocated across the cytoplasmic membrane), and thus conserves the redox energy in a proton gradient. This is NADH-quinone oxidoreductase subunit B 1 from Azoarcus sp. (strain BH72).